The sequence spans 202 residues: Urease accessory protein UreG (202 aa).

Residue glycine 10–threonine 17 participates in GTP binding.

Belongs to the SIMIBI class G3E GTPase family. UreG subfamily. In terms of assembly, homodimer. UreD, UreF and UreG form a complex that acts as a GTP-hydrolysis-dependent molecular chaperone, activating the urease apoprotein by helping to assemble the nickel containing metallocenter of UreC. The UreE protein probably delivers the nickel.

The protein resides in the cytoplasm. Facilitates the functional incorporation of the urease nickel metallocenter. This process requires GTP hydrolysis, probably effectuated by UreG. The chain is Urease accessory protein UreG from Synechococcus sp. (strain JA-3-3Ab) (Cyanobacteria bacterium Yellowstone A-Prime).